The chain runs to 397 residues: RNA binding protein fox-1 homolog 1 (397 aa).

The segment at 1-121 (MNCEREQLRG…NKSQPKRLHV (121 aa)) is disordered. Positions 70–87 (QTHSEQSPADTSAQTVSG) are enriched in polar residues. The segment covering 88–99 (TATQTDDAAPTD) has biased composition (low complexity). Positions 100-113 (GQPQTQPSENTENK) are enriched in polar residues. The region spanning 117 to 193 (KRLHVSNIPF…RKIEVNNATA (77 aa)) is the RRM domain. Arg-317 is subject to Asymmetric dimethylarginine. Omega-N-methylarginine is present on Arg-388.

Binds to the C-terminus of ATXN2. In terms of tissue distribution, predominantly expressed in muscle and brain.

The protein resides in the nucleus. The protein localises to the cytoplasm. In terms of biological role, RNA-binding protein that regulates alternative splicing events by binding to 5'-UGCAUGU-3' elements. Regulates alternative splicing of tissue-specific exons and of differentially spliced exons during erythropoiesis. The sequence is that of RNA binding protein fox-1 homolog 1 (RBFOX1) from Homo sapiens (Human).